We begin with the raw amino-acid sequence, 457 residues long: Antizyme inhibitor 2 (457 aa).

The tract at residues Gln115 to Leu138 is necessary for polyamine uptake stimulation.

It belongs to the Orn/Lys/Arg decarboxylase class-II family. ODC antizyme inhibitor subfamily. In terms of assembly, monomer. Interacts with OAZ1, OAZ2 and OAZ3; this interaction disrupts the interaction between the antizyme and ODC1. Does not form a heterodimer with ODC1. Ubiquitinated, leading to its proteasomal degradation; a process that is reduced in presence of antizymes. May also be degraded through the lysosomal degradative pathway in a proteasomal-independent manner.

It localises to the nucleus. The protein resides in the cytoplasm. It is found in the perinuclear region. The protein localises to the membrane. Its subcellular location is the cytoplasmic vesicle. It localises to the endoplasmic reticulum-Golgi intermediate compartment. The protein resides in the golgi apparatus. It is found in the cis-Golgi network. The protein localises to the trans-Golgi network. Its subcellular location is the cytoplasmic granule. It localises to the cell projection. The protein resides in the axon. It is found in the dendrite. The protein localises to the perikaryon. In terms of biological role, antizyme inhibitor (AZI) protein that positively regulates ornithine decarboxylase (ODC) activity and polyamine uptake. AZI is an enzymatically inactive ODC homolog that counteracts the negative effect of ODC antizymes (AZs) OAZ1, OAZ2 and OAZ3 on ODC activity by competing with ODC for antizyme-binding. Inhibits antizyme-dependent ODC degradation and releases ODC monomers from their inactive complex with antizymes, leading to formation of the catalytically active ODC homodimer and restoring polyamine production. Participates in the morphological integrity of the trans-Golgi network (TGN) and functions as a regulator of intracellular secretory vesicle trafficking. The sequence is that of Antizyme inhibitor 2 (Azin2) from Rattus norvegicus (Rat).